A 106-amino-acid chain; its full sequence is Small ribosomal subunit protein bS20 (106 aa).

The interval 1–32 is disordered; it reads MAQKKPKRNLSALKRHRQSLKRRLRNKAKKSA.

Part of the 30S ribosomal subunit.

Its function is as follows. One of the primary rRNA binding proteins, it binds directly to 16S rRNA where it nucleates assembly of the bottom of the body of the 30S subunit, by binding to several RNA helices of the 16S rRNA. The protein is Small ribosomal subunit protein bS20 (rpsT) of Thermus thermophilus (strain ATCC 27634 / DSM 579 / HB8).